Consider the following 375-residue polypeptide: Deoxyribonuclease-2 (375 aa).

Positions 1-21 (MGLSPAAVLIFLLLGVSQTYA) are cleaved as a signal peptide. Asn131 carries an N-linked (GlcNAc...) asparagine glycan.

Belongs to the DNase II family.

The enzyme catalyses Endonucleolytic cleavage to nucleoside 3'-phosphates and 3'-phosphooligonucleotide end-products.. Functionally, hydrolyzes DNA under acidic conditions with a preference for double-stranded DNA. Implicated in apoptosis. This is Deoxyribonuclease-2 (nuc-1) from Caenorhabditis elegans.